The primary structure comprises 513 residues: ATP synthase subunit alpha (513 aa).

Position 169-176 (169-176) interacts with ATP; that stretch reads GDRQTGKT.

Belongs to the ATPase alpha/beta chains family. As to quaternary structure, F-type ATPases have 2 components, CF(1) - the catalytic core - and CF(0) - the membrane proton channel. CF(1) has five subunits: alpha(3), beta(3), gamma(1), delta(1), epsilon(1). CF(0) has three main subunits: a(1), b(2) and c(9-12). The alpha and beta chains form an alternating ring which encloses part of the gamma chain. CF(1) is attached to CF(0) by a central stalk formed by the gamma and epsilon chains, while a peripheral stalk is formed by the delta and b chains.

It localises to the cell inner membrane. It catalyses the reaction ATP + H2O + 4 H(+)(in) = ADP + phosphate + 5 H(+)(out). Produces ATP from ADP in the presence of a proton gradient across the membrane. The alpha chain is a regulatory subunit. The protein is ATP synthase subunit alpha of Dichelobacter nodosus (strain VCS1703A).